The following is a 216-amino-acid chain: Adenylate kinase (216 aa).

ATP is bound at residue 10–15; it reads GAGKGT. The tract at residues 30-59 is NMP; it reads STGDMLRAAVKAGTPLGLELKKVMDAGQLV. AMP contacts are provided by residues Thr-31, Arg-36, 57–59, 85–88, and Gln-92; these read QLV and GFPR. Residues 122–159 form an LID region; sequence GRRVHLASGRTYHIQYNPPKVEGKDDETGEDLIQRDDD. ATP contacts are provided by residues Arg-123 and 132–133; that span reads TY. Arg-156 and Arg-167 together coordinate AMP. Position 202 (Gly-202) interacts with ATP.

This sequence belongs to the adenylate kinase family. In terms of assembly, monomer.

The protein localises to the cytoplasm. The catalysed reaction is AMP + ATP = 2 ADP. Its pathway is purine metabolism; AMP biosynthesis via salvage pathway; AMP from ADP: step 1/1. Catalyzes the reversible transfer of the terminal phosphate group between ATP and AMP. Plays an important role in cellular energy homeostasis and in adenine nucleotide metabolism. This Pseudomonas putida (strain ATCC 700007 / DSM 6899 / JCM 31910 / BCRC 17059 / LMG 24140 / F1) protein is Adenylate kinase.